The sequence spans 259 residues: 7-cyano-7-deazaguanine synthase (259 aa).

Residue 32-42 (LSGGLDSVTCL) participates in ATP binding. Zn(2+)-binding residues include Cys223, Cys233, Cys236, and Cys239.

This sequence belongs to the QueC family. Requires Zn(2+) as cofactor.

It catalyses the reaction 7-carboxy-7-deazaguanine + NH4(+) + ATP = 7-cyano-7-deazaguanine + ADP + phosphate + H2O + H(+). The protein operates within purine metabolism; 7-cyano-7-deazaguanine biosynthesis. Catalyzes the ATP-dependent conversion of 7-carboxy-7-deazaguanine (CDG) to 7-cyano-7-deazaguanine (preQ(0)). The polypeptide is 7-cyano-7-deazaguanine synthase (Psychrobacter cryohalolentis (strain ATCC BAA-1226 / DSM 17306 / VKM B-2378 / K5)).